Here is a 494-residue protein sequence, read N- to C-terminus: Cytochrome P450 71D94 (494 aa).

A helical; Signal-anchor for type II membrane protein transmembrane segment spans residues 1–21 (MELNLLLVIIILVATYTVSLL). Cys-434 serves as a coordination point for heme.

This sequence belongs to the cytochrome P450 family. Heme is required as a cofactor.

It is found in the endoplasmic reticulum membrane. Its function is as follows. Cytochrome P450 oxygenase of undefined substrate. Not active with limonene, (+)- or (-)-piperitone, (-)-isopiperitone, piperitenone or (+)-pulegone. This chain is Cytochrome P450 71D94 (CYP71D94), found in Mentha gracilis (Gingermint).